The following is a 468-amino-acid chain: Pancreatic lipase-related protein 2 (468 aa).

The signal sequence occupies residues 1–16 (MLLCWIVSLLLATVGG). C20 and C26 are joined by a disulfide. The segment at 92-104 (VHGFIDKGEDGWL) is required for galactolipase activity. C108 and C119 are disulfide-bonded. S170 serves as the catalytic Nucleophile. The active-site Charge relay system is D194. The Ca(2+) site is built by E205, R208, D210, and D213. C255 and C279 are disulfide-bonded. The required for galactolipase activity stretch occupies residues 256–278 (QKNILSTIVDINGIWEGTQNFVA). H281 serves as the catalytic Charge relay system. Cystine bridges form between C303–C314 and C317–C322. Residues N352 and N427 are each glycosylated (N-linked (GlcNAc...) asparagine). Residues 356–468 (WRYKVSVTLS…EDVLQSLYPC (113 aa)) enclose the PLAT domain. Residues C452 and C468 are joined by a disulfide bond.

The protein belongs to the AB hydrolase superfamily. Lipase family. In terms of tissue distribution, expressed in pancreatic acinar cells (at protein level).

Its subcellular location is the secreted. It localises to the zymogen granule membrane. The protein resides in the cell projection. It is found in the neuron projection. The catalysed reaction is a triacylglycerol + H2O = a diacylglycerol + a fatty acid + H(+). It catalyses the reaction a 1,2-diacyl-3-O-(beta-D-galactosyl)-sn-glycerol + 2 H2O = 3-beta-D-galactosyl-sn-glycerol + 2 a fatty acid + 2 H(+). It carries out the reaction 1,2,3-tri-(9Z-octadecenoyl)-glycerol + H2O = di-(9Z)-octadecenoylglycerol + (9Z)-octadecenoate + H(+). The enzyme catalyses di-(9Z)-octadecenoylglycerol + H2O = (9Z-octadecenoyl)-glycerol + (9Z)-octadecenoate + H(+). The catalysed reaction is (9Z-octadecenoyl)-glycerol + H2O = glycerol + (9Z)-octadecenoate + H(+). It catalyses the reaction 1-(9Z-octadecenoyl)-glycerol + H2O = glycerol + (9Z)-octadecenoate + H(+). It carries out the reaction 1,2,3-tripropanoylglycerol + H2O = dipropanoylglycerol + propanoate + H(+). The enzyme catalyses 1,2,3-tributanoylglycerol + H2O = dibutanoylglycerol + butanoate + H(+). The catalysed reaction is 1,2,3-trioctanoylglycerol + H2O = dioctanoylglycerol + octanoate + H(+). It catalyses the reaction 1,2-didecanoylglycerol + H2O = decanoylglycerol + decanoate + H(+). It carries out the reaction long chain 1,2-diacyl-3-O-beta-D-galactosyl-sn-glycerol + H2O = long chain acyl-3-O-beta-D-galactosyl-sn-glycerol + a fatty acid + H(+). The enzyme catalyses 1,2-dioctanoyl-3-O-beta-D-galactosyl-sn-glycerol + H2O = octanoyl-3-(beta-D-galactosyl)-sn-glycerol + octanoate + H(+). The catalysed reaction is 1,2-didodecanoyl-3-beta-D-galactosyl-sn-glycerol + H2O = dodecanoyl-3-beta-D-galactosyl-sn-glycerol + dodecanoate + H(+). It catalyses the reaction 1-beta-D-galactosyl-2,3-didodecanoyl-sn-glycerol + H2O = 1-beta-D-galactosyl-dodecanoyl-sn-glycerol + dodecanoate + H(+). It carries out the reaction a 1,2-diacyl-3-O-[alpha-D-galactosyl-(1-&gt;6)-beta-D-galactosyl]-sn-glycerol + H2O = acyl-3-O-[alpha-D-galactosyl-(1-&gt;6)-beta-D-galactosyl]-sn-glycerol + a fatty acid + H(+). The enzyme catalyses long chain 1,2-diacyl-3-O-[alpha-D-galactosyl-(1-&gt;6)-beta-D-galactosyl]-sn-glycerol + H2O = long chain acyl-3-O-[alpha-D-galactosyl-(1-&gt;6)-beta-D-galactosyl]-sn-glycerol + a fatty acid + H(+). The catalysed reaction is 1,2-dioctanoyl-3-O-[alpha-D-galactosyl-(1-&gt;6)-beta-D-galactosyl]-sn-glycerol + H2O = octanoyl-3-O-[alpha-D-galactosyl-(1-&gt;6)-beta-D-galactosyl]-sn-glycerol + octanoate + H(+). It catalyses the reaction 1,2-didodecanoyl-3-O-[alpha-D-galactosyl-(1-&gt;6)-beta-D-galactosyl]-sn-glycerol + H2O = dodecanoyl-3-O-[alpha-D-galactosyl-(1-&gt;6)-beta-D-galactosyl]-sn-glycerol + dodecanoate + H(+). It carries out the reaction a 1,2-diacyl-sn-glycero-3-phosphocholine + H2O = a monoacyl-sn-glycero-3-phosphocholine + a fatty acid + H(+). Its pathway is glycerolipid metabolism; triacylglycerol degradation. The protein operates within glycolipid metabolism. Its activity is regulated as follows. CLPS stimulates triacylglycerol lipase activity. Triacylglycerol lipase activity is not inhibited by increasing bile salt concentration. Lipase that primarily hydrolyzes triglycerides and galactosylglycerides. In neonates, may play a major role in pancreatic digestion of dietary fats such as milk fat globules enriched in long-chain triglycerides. Hydrolyzes short-, medium- and long-chain fatty acyls in triglycerides without apparent positional specificity. Can completely deacylate triacylglycerols. When the liver matures and bile salt synthesis increases, likely functions mainly as a galactolipase and monoacylglycerol lipase. Hydrolyzes monogalactosyldiglycerols (MGDG) and digalactosyldiacylglycerols (DGDG) present in a plant-based diet, releasing long-chain polyunsaturated fatty acids. Hydrolyzes medium- and long-chain fatty acyls in galactolipids. May act together with LIPF to hydrolyze partially digested triglycerides. Hydrolyzes long-chain monoglycerides with high efficiency. In cytotoxic T cells, contributes to perforin-dependent cell lysis, but is unlikely to mediate direct cytotoxicity. Also has low phospholipase activity. In neurons, required for the localization of the phospholipid 1-oleoyl-2-palmitoyl-PC (OPPC) to neurite tips through acyl chain remodeling of membrane phospholipids. The resulting OPPC-rich lipid membrane domain recruits the t-SNARE protein STX4 by selectively interacting with the STX4 transmembrane domain and this promotes surface expression of the dopamine transporter SLC6A3/DAT at neurite tips by facilitating fusion of SLC6A3-containing transport vesicles with the plasma membrane. This chain is Pancreatic lipase-related protein 2, found in Rattus norvegicus (Rat).